A 315-amino-acid chain; its full sequence is Prephenate dehydratase (315 aa).

One can recognise a Prephenate dehydratase domain in the interval 3–189 (RIAYLGPEGT…ARTRFLLIGV (187 aa)). An ACT domain is found at 203-280 (SAVLRIANVP…ADVRYLGSWP (78 aa)).

Homodimer.

The enzyme catalyses prephenate + H(+) = 3-phenylpyruvate + CO2 + H2O. It functions in the pathway amino-acid biosynthesis; L-phenylalanine biosynthesis; phenylpyruvate from prephenate: step 1/1. The protein is Prephenate dehydratase (pheA) of Mycobacterium ulcerans (strain Agy99).